The primary structure comprises 296 residues: Protoheme IX farnesyltransferase (296 aa).

Topologically, residues 1–9 (MMFKQYLQV) are cytoplasmic. The helical transmembrane segment at 10–28 (TKPGIIFGNLISVIGGFLL) threads the bilayer. The Periplasmic portion of the chain corresponds to 29–37 (ASKGSIDYP). The helical transmembrane segment at 38-56 (LFIYTLVGVSLVVASGCVF) threads the bilayer. At 57–78 (NNYIDRDIDRKMERTKNRVLVK) the chain is on the cytoplasmic side. The chain crosses the membrane as a helical span at residues 79-97 (GLISPGVSLVYATLLGIAG). Residues 98-107 (FMLLWFGANP) are Periplasmic-facing. A helical transmembrane segment spans residues 108-126 (LACWLGVMGFVVYVGVYSL). Residues 127 to 197 (YMKRHSVYGT…YQAANIPVLP (71 aa)) lie on the Cytoplasmic side of the membrane. The helical transmembrane segment at 198–216 (VVKGISVAKNHITLYIIAF) threads the bilayer. The Periplasmic portion of the chain corresponds to 217-228 (AVATLMLTLGGY). Residues 229–247 (AGYKYLVVAAAVSVWWLGM) form a helical membrane-spanning segment. The Cytoplasmic portion of the chain corresponds to 248–268 (ALRGYKVEDDKVWARKLFGFS). The chain crosses the membrane as a helical span at residues 269–287 (IIAITALSIMMSVDFMVPN). Over 288–296 (SQNLLTYVW) the chain is Periplasmic.

The protein belongs to the UbiA prenyltransferase family. Protoheme IX farnesyltransferase subfamily.

Its subcellular location is the cell inner membrane. The enzyme catalyses heme b + (2E,6E)-farnesyl diphosphate + H2O = Fe(II)-heme o + diphosphate. The protein operates within porphyrin-containing compound metabolism; heme O biosynthesis; heme O from protoheme: step 1/1. Converts heme B (protoheme IX) to heme O by substitution of the vinyl group on carbon 2 of heme B porphyrin ring with a hydroxyethyl farnesyl side group. In Salmonella typhimurium (strain LT2 / SGSC1412 / ATCC 700720), this protein is Protoheme IX farnesyltransferase.